Consider the following 301-residue polypeptide: Homoserine O-acetyltransferase (301 aa).

Catalysis depends on Cys142, which acts as the Acyl-thioester intermediate. Substrate is bound by residues Lys163 and Ser192. His235 acts as the Proton acceptor in catalysis. Glu237 is a catalytic residue. Arg249 contacts substrate.

The protein belongs to the MetA family. Homodimer.

The protein resides in the cytoplasm. The catalysed reaction is L-homoserine + acetyl-CoA = O-acetyl-L-homoserine + CoA. It participates in amino-acid biosynthesis; L-methionine biosynthesis via de novo pathway; O-acetyl-L-homoserine from L-homoserine: step 1/1. In terms of biological role, transfers an acetyl group from acetyl-CoA to L-homoserine, forming acetyl-L-homoserine. Utilizes a ping-pong kinetic mechanism in which the acetyl group of acetyl-CoA is initially transferred to the enzyme to form an acetyl-enzyme intermediate before subsequent transfer to homoserine to form the final product, O-acetylhomoserine. Cannot use succinyl-CoA as the acyl donor. This is Homoserine O-acetyltransferase from Bacillus cereus (strain ATCC 10987 / NRS 248).